The primary structure comprises 223 residues: Uracil phosphoribosyltransferase (223 aa).

Residues R86, R111, and 145–153 (DPILATGST) each bind 5-phospho-alpha-D-ribose 1-diphosphate. Uracil-binding positions include I209 and 214–216 (GDA). D215 lines the 5-phospho-alpha-D-ribose 1-diphosphate pocket.

It belongs to the UPRTase family. The cofactor is Mg(2+).

The catalysed reaction is UMP + diphosphate = 5-phospho-alpha-D-ribose 1-diphosphate + uracil. It functions in the pathway pyrimidine metabolism; UMP biosynthesis via salvage pathway; UMP from uracil: step 1/1. Allosterically activated by GTP. Catalyzes the conversion of uracil and 5-phospho-alpha-D-ribose 1-diphosphate (PRPP) to UMP and diphosphate. The protein is Uracil phosphoribosyltransferase of Natronomonas pharaonis (strain ATCC 35678 / DSM 2160 / CIP 103997 / JCM 8858 / NBRC 14720 / NCIMB 2260 / Gabara) (Halobacterium pharaonis).